A 246-amino-acid polypeptide reads, in one-letter code: Chaperone protein SefB (246 aa).

An N-terminal signal peptide occupies residues 1-24 (MYILNKFIRRTVIFFFFCYLPIAS). A disulfide bridge connects residues Cys-124 and Cys-155.

The protein belongs to the periplasmic pilus chaperone family.

It localises to the periplasm. Required for the biogenesis of the SefA (SEF14) fimbria. This is Chaperone protein SefB (sefB) from Salmonella enteritidis.